The sequence spans 271 residues: MSSHADSNPWTVPALAQAKRAGRKLVMLTAYDASFARTFDVNGVDLILVGDSLGMVMQGHDSTLAVTTADMVYHTAAVARALDRALLVADLSFQADATPERALDAATQLLQAGAEMVKIEGAGHKLEVIRYLVEREIPVCSHLGLTPQSVLRFGGYKVQGRGEAGEQLRRDAQAVVDAGASLVVLECVPTPIATQISAELSVPTIGIGAGPGCDGQVLVMHDMLGLDSGHRRPKFVKDFLAEGGSVAGAVRAYAQAVRDGSFPDAEHAYAA.

Mg(2+) is bound by residues Asp51 and Asp90. Residues 51 to 52 (DS), Asp90, and Lys118 contribute to the 3-methyl-2-oxobutanoate site. A Mg(2+)-binding site is contributed by Glu120. Glu186 (proton acceptor) is an active-site residue.

This sequence belongs to the PanB family. In terms of assembly, homodecamer; pentamer of dimers. It depends on Mg(2+) as a cofactor.

The protein localises to the cytoplasm. The enzyme catalyses 3-methyl-2-oxobutanoate + (6R)-5,10-methylene-5,6,7,8-tetrahydrofolate + H2O = 2-dehydropantoate + (6S)-5,6,7,8-tetrahydrofolate. Its pathway is cofactor biosynthesis; (R)-pantothenate biosynthesis; (R)-pantoate from 3-methyl-2-oxobutanoate: step 1/2. Its function is as follows. Catalyzes the reversible reaction in which hydroxymethyl group from 5,10-methylenetetrahydrofolate is transferred onto alpha-ketoisovalerate to form ketopantoate. The polypeptide is 3-methyl-2-oxobutanoate hydroxymethyltransferase (Xanthomonas oryzae pv. oryzae (strain PXO99A)).